A 415-amino-acid chain; its full sequence is Lipoyl synthase, apicoplast (415 aa).

An N-terminal signal peptide occupies residues 1–23 (MHFGIPSLFYLYILFSIIMRIKC). Positions 153, 158, 164, 179, 183, 186, and 394 each coordinate [4Fe-4S] cluster. In terms of domain architecture, Radical SAM core spans 165 to 383 (WNIGTATIML…KEEGLKMGFK (219 aa)).

Belongs to the radical SAM superfamily. Lipoyl synthase family. The cofactor is [4Fe-4S] cluster.

It localises to the plastid. Its subcellular location is the apicoplast. The enzyme catalyses [[Fe-S] cluster scaffold protein carrying a second [4Fe-4S](2+) cluster] + N(6)-octanoyl-L-lysyl-[protein] + 2 oxidized [2Fe-2S]-[ferredoxin] + 2 S-adenosyl-L-methionine + 4 H(+) = [[Fe-S] cluster scaffold protein] + N(6)-[(R)-dihydrolipoyl]-L-lysyl-[protein] + 4 Fe(3+) + 2 hydrogen sulfide + 2 5'-deoxyadenosine + 2 L-methionine + 2 reduced [2Fe-2S]-[ferredoxin]. The protein operates within protein modification; protein lipoylation via endogenous pathway; protein N(6)-(lipoyl)lysine from octanoyl-[acyl-carrier-protein]: step 2/2. Functionally, catalyzes the radical-mediated insertion of two sulfur atoms into the C-6 and C-8 positions of the octanoyl moiety bound to the lipoyl domains of lipoate-dependent enzymes, thereby converting the octanoylated domains into lipoylated derivatives. The chain is Lipoyl synthase, apicoplast from Plasmodium falciparum (isolate 3D7).